We begin with the raw amino-acid sequence, 217 residues long: MKFFLKESKVEKHGRQHLEKVMECYLKFEELMEAFYRGDCRLVSELTKEIAIKEHEADEIRRKMELEFYEGAFLPFDREDRIMLVESIDKVADVIESAAFTVSLGKVAFPAEFRDDFRAMMKVTGKTIRALHECVESLETDLGEAMRKVHEIERFEDEADIIERKIITGLYSAYRQDRIGVVKFLDMKEITRKVANISDRAEDASDRALIIIAKRRG.

The protein belongs to the UPF0111 family.

The chain is UPF0111 protein MTH_1689 from Methanothermobacter thermautotrophicus (strain ATCC 29096 / DSM 1053 / JCM 10044 / NBRC 100330 / Delta H) (Methanobacterium thermoautotrophicum).